Consider the following 111-residue polypeptide: Protein RnfH (111 aa).

A disordered region spans residues 88–111 (RRRRVQKTRESGTREGQKWLRGGA). Positions 94 to 105 (KTRESGTREGQK) are enriched in basic and acidic residues.

This sequence belongs to the UPF0125 (RnfH) family.

The protein is Protein RnfH of Cupriavidus pinatubonensis (strain JMP 134 / LMG 1197) (Cupriavidus necator (strain JMP 134)).